Here is a 175-residue protein sequence, read N- to C-terminus: Short chain dehydrogenase/reductase dpmpG (175 aa).

The NADP(+) site is built by Ile-18, Asp-71, Asn-98, and Lys-132.

This sequence belongs to the short-chain dehydrogenases/reductases (SDR) family.

It functions in the pathway secondary metabolite biosynthesis; terpenoid biosynthesis. In terms of biological role, short chain dehydrogenase/reductase; part of the gene cluster that mediates the biosynthesis of diterpenoid pyrones. The first step of the pathway is the synthesis of the alpha-pyrone moiety by the polyketide synthase dpmpA via condensation of one acetyl-CoA starter unit with 3 malonyl-CoA units and 2 methylations. The alpha-pyrone is then combined with geranylgeranyl pyrophosphate (GGPP) formed by the GGPP synthase dpmpD through the action of the prenyltransferase dpmpC to yield a linear alpha-pyrone diterpenoid. Subsequent steps in the diterpenoid pyrone biosynthetic pathway involve the decalin core formation, which is initiated by the epoxidation of the C10-C11 olefin by the FAD-dependent oxidoreductase dpmpE, and is followed by a cyclization cascade catalyzed by the terpene cyclase dpmpB. The short chain dehydrogenase/reductase dpmpG then oxidizes the 8S hydroxy group to a ketone and the short chain dehydrogenase/reductase dpmpH reduces the ketone to the 8R hydroxy group to yield higginsianin B. Higginsianin B is further methylated by the methyltransferase dpmpI to produce the intermediate named FDDP B. The cytochrome P450 monooxygenase dpmpJ then oxidizes the C-26 methyl to primary alcohol, producing the final diterpenoid pyrone with a C-26 primary alcohol on the gamma-pyrone moiety named FDDP C. The chain is Short chain dehydrogenase/reductase dpmpG from Macrophomina phaseolina (strain MS6) (Charcoal rot fungus).